A 308-amino-acid chain; its full sequence is Pyrroline-5-carboxylate reductase 3 (308 aa).

This sequence belongs to the pyrroline-5-carboxylate reductase family. As to quaternary structure, homodecamer; composed of 5 homodimers.

It is found in the cytoplasm. The catalysed reaction is L-proline + NADP(+) = (S)-1-pyrroline-5-carboxylate + NADPH + 2 H(+). The enzyme catalyses L-proline + NAD(+) = (S)-1-pyrroline-5-carboxylate + NADH + 2 H(+). It participates in amino-acid biosynthesis; L-proline biosynthesis; L-proline from L-glutamate 5-semialdehyde: step 1/1. In terms of biological role, oxidoreductase that catalyzes the last step in proline biosynthesis, which corresponds to the reduction of pyrroline-5-carboxylate (P5C) to L-proline using NAD(P)H. Proline is synthesized from either glutamate or ornithine; both are converted to P5C, and then to proline via pyrroline-5-carboxylate reductases (PYCRs). PYCR3 is exclusively linked to the biosynthesis of proline from ornithine. The chain is Pyrroline-5-carboxylate reductase 3 from Bos taurus (Bovine).